Here is a 22-residue protein sequence, read N- to C-terminus: Large ribosomal subunit protein bL32 (22 aa).

The disordered stretch occupies residues 1–22 (CVPKRKVSPSXRNMRXAHDXLT).

It belongs to the bacterial ribosomal protein bL32 family.

The protein is Large ribosomal subunit protein bL32 (rpmF) of Brevundimonas vesicularis (Pseudomonas vesicularis).